The following is a 204-amino-acid chain: uncharacterized protein (204 aa).

The chain crosses the membrane as a helical span at residues 160 to 180 (GLTVAAIASVVVAGAVTYLVV).

To M.pneumoniae MPN_373 C-terminal region.

The protein resides in the cell membrane. This is an uncharacterized protein from Mycoplasma pneumoniae (strain ATCC 29342 / M129 / Subtype 1) (Mycoplasmoides pneumoniae).